A 458-amino-acid polypeptide reads, in one-letter code: Flavohemoprotein (458 aa).

The Globin domain maps to 2–158 (TLSEDTLRAV…LADLFIKREE (157 aa)). H107 serves as a coordination point for heme b. Catalysis depends on charge relay system residues Y117 and E157. The tract at residues 169-457 (GGWRQTRTFR…FEMFGPFKAS (289 aa)) is reductase. Positions 172–279 (RQTRTFRVEE…APPYGDFFLR (108 aa)) constitute an FAD-binding FR-type domain. FAD-binding positions include Y211 and 228–231 (RQYS). 321–326 (GIGQTP) provides a ligand contact to NADP(+). Residue 450-453 (MFGP) coordinates FAD.

Belongs to the globin family. Two-domain flavohemoproteins subfamily. It in the C-terminal section; belongs to the flavoprotein pyridine nucleotide cytochrome reductase family. Monomer. Requires heme b as cofactor. FAD serves as cofactor.

The catalysed reaction is 2 nitric oxide + NADPH + 2 O2 = 2 nitrate + NADP(+) + H(+). The enzyme catalyses 2 nitric oxide + NADH + 2 O2 = 2 nitrate + NAD(+) + H(+). Its function is as follows. Flavohemoprotein involved in nitric oxide (NO) detoxification in an aerobic process, termed nitric oxide dioxygenase (NOD) reaction that utilizes O(2) and NAD(P)H to convert NO to nitrate, which protects the protozoan parasite from various noxious nitrogen compounds. Therefore, plays a central role in the inducible response to nitrosative stress. May also be involved in O(2) detoxification. The chain is Flavohemoprotein (hmpA) from Giardia intestinalis (strain ATCC 50803 / WB clone C6) (Giardia lamblia).